A 91-amino-acid polypeptide reads, in one-letter code: Small ribosomal subunit protein uS19 (91 aa).

This sequence belongs to the universal ribosomal protein uS19 family.

Functionally, protein S19 forms a complex with S13 that binds strongly to the 16S ribosomal RNA. In Bordetella bronchiseptica (strain ATCC BAA-588 / NCTC 13252 / RB50) (Alcaligenes bronchisepticus), this protein is Small ribosomal subunit protein uS19.